The sequence spans 75 residues: Venom serine protease inhibitor BiVSPI (75 aa).

Positions 1–20 (MSRILFVFLAVMAIFSTSFG) are cleaved as a signal peptide. 5 disulfides stabilise this stretch: C23-C55, C32-C51, C35-C47, C39-C75, and C57-C69. Residues 23-75 (CGLNEEFKSCGSCEPTCAKPRVTICTMECKIGCQCKSGYLRNGEGTCVLPEKC) enclose the TIL domain.

Belongs to the serine protease inhibitor-like (TIL domain-containing) family. May be O-glycosylated. Expressed by the venom gland (at protein level) and expressed in fat body.

It is found in the secreted. It localises to the target cell membrane. Its function is as follows. Antimicrobial venom serine protease inhibitor. Exhibits inhibitory activity against chymotrypsin (IC(50)=19.56 nM, Ki=15.24 nM) and microbial serine proteases, such as subtilisin A (IC(50)=6.57 nM, Ki=6.83 nM) and proteinase K (IC(50)=7.11 nM, Ki=7.02 nM). Has not activity against trypsin, plasmin, tPA, thrombin, factor Xa or elastase. Binds and inhibits Gram-positive bacteria (B.subtilis (MIC=29.45 uM), B.thuringiensis (MIC=91.03 uM)) and the entomopathogenic fungus B.bassiana (MIC=30.09 uM) but not to E.coli. This Bombus ignitus (Bumblebee) protein is Venom serine protease inhibitor BiVSPI.